Reading from the N-terminus, the 173-residue chain is Transcription factor E (173 aa).

Positions 6–89 (PLEELLEFVR…YWYVDRETLN (84 aa)) constitute an HTH TFE/IIEalpha-type domain.

Belongs to the TFE family. In terms of assembly, monomer. Interaction with RNA polymerase subunits RpoF and RpoE is necessary for Tfe stimulatory transcription activity. Able to interact with Tbp and RNA polymerase in the absence of DNA promoter. Interacts both with the preinitiation and elongation complexes.

In terms of biological role, transcription factor that plays a role in the activation of archaeal genes transcribed by RNA polymerase. Facilitates transcription initiation by enhancing TATA-box recognition by TATA-box-binding protein (Tbp), and transcription factor B (Tfb) and RNA polymerase recruitment. Not absolutely required for transcription in vitro, but particularly important in cases where Tbp or Tfb function is not optimal. It dynamically alters the nucleic acid-binding properties of RNA polymerases by stabilizing the initiation complex and destabilizing elongation complexes. Seems to translocate with the RNA polymerase following initiation and acts by binding to the non template strand of the transcription bubble in elongation complexes. The chain is Transcription factor E from Ignicoccus hospitalis (strain KIN4/I / DSM 18386 / JCM 14125).